The primary structure comprises 284 residues: Distal membrane arm assembly component 2 (284 aa).

Belongs to the ATP synthase subunit s family. Associates with mitochondrial complex I assembly intermediates during its biogenesis.

Functionally, involved in the assembly of the mitochondrial membrane respiratory chain NADH dehydrogenase (Complex I). The protein is Distal membrane arm assembly component 2 of Drosophila melanogaster (Fruit fly).